The following is a 368-amino-acid chain: Ferrochelatase (368 aa).

H209 and E290 together coordinate Fe cation.

It belongs to the ferrochelatase family.

It localises to the cytoplasm. The catalysed reaction is heme b + 2 H(+) = protoporphyrin IX + Fe(2+). It participates in porphyrin-containing compound metabolism; protoheme biosynthesis; protoheme from protoporphyrin-IX: step 1/1. Catalyzes the ferrous insertion into protoporphyrin IX. This chain is Ferrochelatase, found in Herminiimonas arsenicoxydans.